The following is a 189-amino-acid chain: MTKLPYALLDKGSLLVASPDVNGGIFSRSVVLVCEHSLNGSFGLILNKILEIDLPEEIFPLDHFDESKVRFCMGGPLQANQIMLLHTSPDSANSSIEICPSVFLGGDFSFAGEKEGRTRDDKMLLCFGYSGWQGGQLEKEFLEGLWFLAPSSQEIIFTDAPERMWSDVLQHLGGRFASLSTIPENLLLN.

The protein belongs to the UPF0301 (AlgH) family.

This chain is UPF0301 protein CTA_0231, found in Chlamydia trachomatis serovar A (strain ATCC VR-571B / DSM 19440 / HAR-13).